Consider the following 56-residue polypeptide: Metallothionein (56 aa).

The Zn(2+) site is built by Cys9, Cys11, Cys14, Cys16, Cys32, Cys36, His40, Cys47, His49, Cys52, and Cys54.

Belongs to the metallothionein superfamily. Type 14 family.

In terms of biological role, may play a role in essential metal ion homeostasis (especially zinc homeostasis) and resistance to certain non-essential metal ions. Binds four zinc ions. The chain is Metallothionein (smtA) from Synechococcus elongatus (strain ATCC 33912 / PCC 7942 / FACHB-805) (Anacystis nidulans R2).